We begin with the raw amino-acid sequence, 83 residues long: Carboxysome shell vertex protein CsoS4A (83 aa).

The BMV domain occupies 1–78; the sequence is MKIMQVEKTL…SDLTIIGIID (78 aa).

Belongs to the CcmL/EutN family. CsoS4 subfamily. In terms of assembly, homopentamer.

Its subcellular location is the carboxysome. Probably forms vertices in the carboxysome, a polyhedral inclusion where RuBisCO (ribulose bisphosphate carboxylase, cbbL-cbbS) is sequestered. Has been modeled to induce curvature upon insertion into an otherwise flat hexagonal layer of major carboxysome subunits. A minor shell protein, only 12 pentamers of CsoS4A/CsoS4B are calculated to be present in each carboxysome. The 2 CsoS4 proteins contribute to the impermeability of the carboxysome to CO(2). Functionally, unlike beta-carboxysomes, alpha-carboxysomes (Cb) can form without cargo protein. CsoS2 is essential for Cb formation and is also capable of targeting foreign proteins to the Cb. The Cb shell assembles with the aid of CsoS2; CsoS1A, CsoS1B and CsoS1C form the majority of the shell while CsoS4A and CsoS4B form vertices. CsoS1D forms pseudohexamers that probably control metabolite flux into and out of the shell. This Halothiobacillus neapolitanus (strain ATCC 23641 / c2) (Thiobacillus neapolitanus) protein is Carboxysome shell vertex protein CsoS4A.